Reading from the N-terminus, the 533-residue chain is Hydroxylamine reductase (533 aa).

4 residues coordinate [4Fe-4S] cluster: C3, C6, C15, and C21. H234, E258, C302, C389, C417, C442, E476, and K478 together coordinate hybrid [4Fe-2O-2S] cluster. At C389 the chain carries Cysteine persulfide.

This sequence belongs to the HCP family. It depends on [4Fe-4S] cluster as a cofactor. The cofactor is hybrid [4Fe-2O-2S] cluster.

It is found in the cytoplasm. It carries out the reaction A + NH4(+) + H2O = hydroxylamine + AH2 + H(+). In terms of biological role, catalyzes the reduction of hydroxylamine to form NH(3) and H(2)O. This is Hydroxylamine reductase from Maridesulfovibrio salexigens (strain ATCC 14822 / DSM 2638 / NCIMB 8403 / VKM B-1763) (Desulfovibrio salexigens).